A 180-amino-acid chain; its full sequence is MNELKQTWKTMLSEFQDQAELKQDQLFVLGCSTSEVAGSRIGTSGSVDIAESIYSGLAELREKTGIHLAFQCCEHLNRALVVEAETAKLFRLPTVSAVPVPKAGGAMASYAFKQMKSPVLVETIQADAGIDIGDTFIGMHLKPVAVPVRVSQNSLGSAHVTLARTRPKLIGGVRAVYECE.

Belongs to the UPF0340 family.

The protein is UPF0340 protein YwlG (ywlG) of Bacillus subtilis (strain 168).